The chain runs to 221 residues: 7-cyano-7-deazaguanine synthase (221 aa).

8 to 18 (LSGGMDSAAVI) is a binding site for ATP. 4 residues coordinate Zn(2+): Cys-186, Cys-196, Cys-199, and Cys-202.

Belongs to the QueC family. Zn(2+) is required as a cofactor.

The enzyme catalyses 7-carboxy-7-deazaguanine + NH4(+) + ATP = 7-cyano-7-deazaguanine + ADP + phosphate + H2O + H(+). Its pathway is purine metabolism; 7-cyano-7-deazaguanine biosynthesis. Its function is as follows. Catalyzes the ATP-dependent conversion of 7-carboxy-7-deazaguanine (CDG) to 7-cyano-7-deazaguanine (preQ(0)). The chain is 7-cyano-7-deazaguanine synthase from Stenotrophomonas maltophilia (strain K279a).